The following is a 222-amino-acid chain: Phosphoribosylformylglycinamidine synthase subunit PurQ (222 aa).

The region spanning 3-222 (AAVVVFPGSN…RALAGALTPA (220 aa)) is the Glutamine amidotransferase type-1 domain. The Nucleophile role is filled by cysteine 86. Active-site residues include histidine 194 and glutamate 196.

In terms of assembly, part of the FGAM synthase complex composed of 1 PurL, 1 PurQ and 2 PurS subunits.

It is found in the cytoplasm. It carries out the reaction N(2)-formyl-N(1)-(5-phospho-beta-D-ribosyl)glycinamide + L-glutamine + ATP + H2O = 2-formamido-N(1)-(5-O-phospho-beta-D-ribosyl)acetamidine + L-glutamate + ADP + phosphate + H(+). The catalysed reaction is L-glutamine + H2O = L-glutamate + NH4(+). It functions in the pathway purine metabolism; IMP biosynthesis via de novo pathway; 5-amino-1-(5-phospho-D-ribosyl)imidazole from N(2)-formyl-N(1)-(5-phospho-D-ribosyl)glycinamide: step 1/2. Functionally, part of the phosphoribosylformylglycinamidine synthase complex involved in the purines biosynthetic pathway. Catalyzes the ATP-dependent conversion of formylglycinamide ribonucleotide (FGAR) and glutamine to yield formylglycinamidine ribonucleotide (FGAM) and glutamate. The FGAM synthase complex is composed of three subunits. PurQ produces an ammonia molecule by converting glutamine to glutamate. PurL transfers the ammonia molecule to FGAR to form FGAM in an ATP-dependent manner. PurS interacts with PurQ and PurL and is thought to assist in the transfer of the ammonia molecule from PurQ to PurL. This chain is Phosphoribosylformylglycinamidine synthase subunit PurQ, found in Ruegeria pomeroyi (strain ATCC 700808 / DSM 15171 / DSS-3) (Silicibacter pomeroyi).